The primary structure comprises 243 residues: Large ribosomal subunit protein uL2 (243 aa).

The disordered stretch occupies residues 202–243 (HGGGRHQHVGQSSTVSRNAPPGAKVGSIAARKTGRAKIKDRR). Over residues 233-243 (KTGRAKIKDRR) the composition is skewed to basic residues.

This sequence belongs to the universal ribosomal protein uL2 family. Part of the 50S ribosomal subunit. Forms a bridge to the 30S subunit in the 70S ribosome.

Its function is as follows. One of the primary rRNA binding proteins. Required for association of the 30S and 50S subunits to form the 70S ribosome, for tRNA binding and peptide bond formation. It has been suggested to have peptidyltransferase activity; this is somewhat controversial. Makes several contacts with the 16S rRNA in the 70S ribosome. The sequence is that of Large ribosomal subunit protein uL2 from Cenarchaeum symbiosum (strain A).